Here is a 390-residue protein sequence, read N- to C-terminus: Glutamate 5-kinase (390 aa).

Lys-29 contacts ATP. 3 residues coordinate substrate: Ser-69, Asp-156, and Asn-168. 188-189 (TD) is a binding site for ATP. In terms of domain architecture, PUA spans 295–374 (SGSLIVDAGA…EQFDRILGNN (80 aa)).

This sequence belongs to the glutamate 5-kinase family.

The protein localises to the cytoplasm. The enzyme catalyses L-glutamate + ATP = L-glutamyl 5-phosphate + ADP. Its pathway is amino-acid biosynthesis; L-proline biosynthesis; L-glutamate 5-semialdehyde from L-glutamate: step 1/2. Functionally, catalyzes the transfer of a phosphate group to glutamate to form L-glutamate 5-phosphate. This is Glutamate 5-kinase from Psychrobacter arcticus (strain DSM 17307 / VKM B-2377 / 273-4).